A 291-amino-acid chain; its full sequence is Acetyl-coenzyme A carboxylase carboxyl transferase subunit beta (291 aa).

The region spanning 34 to 291 is the CoA carboxyltransferase N-terminal domain; it reads MWTKCSNCNN…LILHGVNKYE (258 aa). 4 residues coordinate Zn(2+): C38, C41, C57, and C60. A C4-type zinc finger spans residues 38–60; the sequence is CSNCNNMIYYEDLENNKYVCTKC.

Belongs to the AccD/PCCB family. As to quaternary structure, acetyl-CoA carboxylase is a heterohexamer composed of biotin carboxyl carrier protein (AccB), biotin carboxylase (AccC) and two subunits each of ACCase subunit alpha (AccA) and ACCase subunit beta (AccD). The cofactor is Zn(2+).

The protein localises to the cytoplasm. The enzyme catalyses N(6)-carboxybiotinyl-L-lysyl-[protein] + acetyl-CoA = N(6)-biotinyl-L-lysyl-[protein] + malonyl-CoA. It participates in lipid metabolism; malonyl-CoA biosynthesis; malonyl-CoA from acetyl-CoA: step 1/1. Functionally, component of the acetyl coenzyme A carboxylase (ACC) complex. Biotin carboxylase (BC) catalyzes the carboxylation of biotin on its carrier protein (BCCP) and then the CO(2) group is transferred by the transcarboxylase to acetyl-CoA to form malonyl-CoA. The chain is Acetyl-coenzyme A carboxylase carboxyl transferase subunit beta from Clostridium botulinum (strain Eklund 17B / Type B).